A 229-amino-acid chain; its full sequence is 3,4-dihydroxy-2-butanone 4-phosphate synthase (229 aa).

D-ribulose 5-phosphate contacts are provided by residues 28 to 29, Asp33, 164 to 168, and Glu188; these read RE and RGGHT. Glu29 is a binding site for Mg(2+). His167 lines the Mg(2+) pocket.

This sequence belongs to the DHBP synthase family. In terms of assembly, homodimer. It depends on Mg(2+) as a cofactor. Mn(2+) is required as a cofactor.

The catalysed reaction is D-ribulose 5-phosphate = (2S)-2-hydroxy-3-oxobutyl phosphate + formate + H(+). The protein operates within cofactor biosynthesis; riboflavin biosynthesis; 2-hydroxy-3-oxobutyl phosphate from D-ribulose 5-phosphate: step 1/1. Its function is as follows. Catalyzes the conversion of D-ribulose 5-phosphate to formate and 3,4-dihydroxy-2-butanone 4-phosphate. This chain is 3,4-dihydroxy-2-butanone 4-phosphate synthase, found in Methanothermobacter thermautotrophicus (strain ATCC 29096 / DSM 1053 / JCM 10044 / NBRC 100330 / Delta H) (Methanobacterium thermoautotrophicum).